We begin with the raw amino-acid sequence, 58 residues long: Large ribosomal subunit protein bL32c (58 aa).

Positions 1–19 (MAVPKKRKSKMKTRLRKAQ) are enriched in basic residues. The interval 1–25 (MAVPKKRKSKMKTRLRKAQWKSEAS) is disordered.

The protein belongs to the bacterial ribosomal protein bL32 family.

The protein localises to the plastid. It is found in the chloroplast. The polypeptide is Large ribosomal subunit protein bL32c (rpl32) (Chlorella vulgaris (Green alga)).